A 286-amino-acid chain; its full sequence is D-tagatose-1,6-bisphosphate aldolase subunit KbaY (286 aa).

Catalysis depends on Asp-82, which acts as the Proton donor. Zn(2+) is bound by residues His-83 and His-180. Gly-181 is a binding site for dihydroxyacetone phosphate. Zn(2+) is bound at residue His-208. Dihydroxyacetone phosphate contacts are provided by residues Gly-209–Ser-211 and Asn-230–Thr-233.

Belongs to the class II fructose-bisphosphate aldolase family. TagBP aldolase KbaY subfamily. Homotetramer. Forms a complex with KbaZ. The cofactor is Zn(2+).

It catalyses the reaction D-tagatofuranose 1,6-bisphosphate = D-glyceraldehyde 3-phosphate + dihydroxyacetone phosphate. The protein operates within carbohydrate metabolism; D-tagatose 6-phosphate degradation; D-glyceraldehyde 3-phosphate and glycerone phosphate from D-tagatose 6-phosphate: step 2/2. Catalytic subunit of the tagatose-1,6-bisphosphate aldolase KbaYZ, which catalyzes the reversible aldol condensation of dihydroxyacetone phosphate (DHAP or glycerone-phosphate) with glyceraldehyde 3-phosphate (G3P) to produce tagatose 1,6-bisphosphate (TBP). Requires KbaZ subunit for full activity and stability. This Escherichia coli O7:K1 (strain IAI39 / ExPEC) protein is D-tagatose-1,6-bisphosphate aldolase subunit KbaY.